Reading from the N-terminus, the 457-residue chain is MSRTYFGTDGIRGAVGQAPITPDFVLRLGHAVGRVLKSQQTSPASRPTVLIGKDTRISGYMLESALEAGFASAGVDVLLTGPLPTPGVAYLTRALRLSLGVVISASHNPYGDNGIKFFSAKGEKLPDSWEQQVEATVEEAAQWVDSSGLGKARRLDDAQGRYIEFCKSTVAGELSLKGLKLVVDGAHGAAYQVAPAVFHELGAEVISIGCNPNGLNINDGFGATHPEALVSAVQAHQADYGIALDGDADRLQLVDATGRLYNGDELLYLMTLDRLAAEPSEDAAPSRVGVPGVVGTLMTNLAVEQALAARGVAFVRAKVGDRYVLEELLARGWQLGGEGSGHLIALDKHTTGDGLVSALQVLQAVVRSGRTLAQLLEGLTLFPQVLLNVRLQPGQDWKASAALAEAQRESLAELGERGRILIRPSGTEPLLRVMVEASDAALAQRCAQRMADAVRRA.

The Phosphoserine intermediate role is filled by serine 106. Residues serine 106, aspartate 245, aspartate 247, and aspartate 249 each coordinate Mg(2+). A Phosphoserine modification is found at serine 106.

The protein belongs to the phosphohexose mutase family. The cofactor is Mg(2+). In terms of processing, activated by phosphorylation.

The enzyme catalyses alpha-D-glucosamine 1-phosphate = D-glucosamine 6-phosphate. In terms of biological role, catalyzes the conversion of glucosamine-6-phosphate to glucosamine-1-phosphate. This Methylibium petroleiphilum (strain ATCC BAA-1232 / LMG 22953 / PM1) protein is Phosphoglucosamine mutase.